The primary structure comprises 178 residues: Large ribosomal subunit protein uL6 (178 aa).

Belongs to the universal ribosomal protein uL6 family. In terms of assembly, part of the 50S ribosomal subunit.

In terms of biological role, this protein binds to the 23S rRNA, and is important in its secondary structure. It is located near the subunit interface in the base of the L7/L12 stalk, and near the tRNA binding site of the peptidyltransferase center. The chain is Large ribosomal subunit protein uL6 from Streptococcus agalactiae serotype Ia (strain ATCC 27591 / A909 / CDC SS700).